The sequence spans 224 residues: ATP-dependent dethiobiotin synthetase BioD (224 aa).

Residue 12-17 (GVGKTF) coordinates ATP. A Mg(2+)-binding site is contributed by T16. The active site involves K37. T41 contacts substrate. Residues N52, 107 to 110 (EGAG), 167 to 168 (GS), 197 to 199 (PEG), and E204 each bind ATP. Mg(2+)-binding residues include N52 and E107.

This sequence belongs to the dethiobiotin synthetase family. Homodimer. It depends on Mg(2+) as a cofactor.

The protein localises to the cytoplasm. It catalyses the reaction (7R,8S)-7,8-diammoniononanoate + CO2 + ATP = (4R,5S)-dethiobiotin + ADP + phosphate + 3 H(+). It functions in the pathway cofactor biosynthesis; biotin biosynthesis; biotin from 7,8-diaminononanoate: step 1/2. In terms of biological role, catalyzes a mechanistically unusual reaction, the ATP-dependent insertion of CO2 between the N7 and N8 nitrogen atoms of 7,8-diaminopelargonic acid (DAPA, also called 7,8-diammoniononanoate) to form a ureido ring. In Corynebacterium glutamicum (strain ATCC 13032 / DSM 20300 / JCM 1318 / BCRC 11384 / CCUG 27702 / LMG 3730 / NBRC 12168 / NCIMB 10025 / NRRL B-2784 / 534), this protein is ATP-dependent dethiobiotin synthetase BioD.